Consider the following 657-residue polypeptide: Threonine--tRNA ligase (657 aa).

A TGS domain is found at methionine 1–threonine 61. The tract at residues aspartate 244–proline 549 is catalytic. The Zn(2+) site is built by cysteine 349, histidine 400, and histidine 526.

It belongs to the class-II aminoacyl-tRNA synthetase family. In terms of assembly, homodimer. Requires Zn(2+) as cofactor.

The protein resides in the cytoplasm. The enzyme catalyses tRNA(Thr) + L-threonine + ATP = L-threonyl-tRNA(Thr) + AMP + diphosphate + H(+). Functionally, catalyzes the attachment of threonine to tRNA(Thr) in a two-step reaction: L-threonine is first activated by ATP to form Thr-AMP and then transferred to the acceptor end of tRNA(Thr). Also edits incorrectly charged L-seryl-tRNA(Thr). The protein is Threonine--tRNA ligase of Hyphomonas neptunium (strain ATCC 15444).